The following is a 540-amino-acid chain: Esterase B1 (540 aa).

Cys68 and Cys81 are oxidised to a cystine. Ser191 acts as the Acyl-ester intermediate in catalysis. Active-site charge relay system residues include Glu324 and His442. Asn452 carries an N-linked (GlcNAc...) asparagine glycan.

This sequence belongs to the type-B carboxylesterase/lipase family.

It catalyses the reaction a carboxylic ester + H2O = an alcohol + a carboxylate + H(+). In terms of biological role, overproduction of nonspecific esterases is a common mechanism of resistance to organophosphate insecticides. This Culex pipiens (House mosquito) protein is Esterase B1 (B1).